We begin with the raw amino-acid sequence, 513 residues long: Na(+)/H(+) antiporter NhaB (513 aa).

12 consecutive transmembrane segments (helical) span residues 23–43 (LALI…PFVA), 52–72 (IFTL…LLAI), 97–117 (LLLM…LFIF), 120–140 (LLLS…AAAF), 144–164 (FLDA…FYGI), 202–222 (LMMH…VGEP), 238–258 (FFLR…LTCL), 303–323 (AIIG…VGLI), 348–368 (TESL…AVII), 391–411 (LFYI…VGTI), 447–467 (ATPN…APLI), and 475–495 (VWMA…CVEF).

The protein belongs to the NhaB Na(+)/H(+) (TC 2.A.34) antiporter family.

It is found in the cell inner membrane. The catalysed reaction is 2 Na(+)(in) + 3 H(+)(out) = 2 Na(+)(out) + 3 H(+)(in). In terms of biological role, na(+)/H(+) antiporter that extrudes sodium in exchange for external protons. The polypeptide is Na(+)/H(+) antiporter NhaB (Escherichia coli (strain 55989 / EAEC)).